Reading from the N-terminus, the 498-residue chain is ATP synthase subunit beta, chloroplastic (498 aa).

Residue Gly-172–Thr-179 coordinates ATP.

It belongs to the ATPase alpha/beta chains family. F-type ATPases have 2 components, CF(1) - the catalytic core - and CF(0) - the membrane proton channel. CF(1) has five subunits: alpha(3), beta(3), gamma(1), delta(1), epsilon(1). CF(0) has four main subunits: a(1), b(1), b'(1) and c(9-12).

The protein resides in the plastid. It localises to the chloroplast thylakoid membrane. The catalysed reaction is ATP + H2O + 4 H(+)(in) = ADP + phosphate + 5 H(+)(out). Functionally, produces ATP from ADP in the presence of a proton gradient across the membrane. The catalytic sites are hosted primarily by the beta subunits. The chain is ATP synthase subunit beta, chloroplastic from Solanum bulbocastanum (Wild potato).